A 60-amino-acid chain; its full sequence is Large ribosomal subunit protein bL32 (60 aa).

The protein belongs to the bacterial ribosomal protein bL32 family.

This is Large ribosomal subunit protein bL32 from Latilactobacillus sakei subsp. sakei (strain 23K) (Lactobacillus sakei subsp. sakei).